The following is a 1504-amino-acid chain: Nischarin (1504 aa).

Ala-2 carries the N-acetylalanine modification. Residues 2–133 form a necessary for binding to phosphoinositide-3-P; not sufficient for targeting to endosomes region; sequence ATARTFGPER…GITAALAEEL (132 aa). The 111-residue stretch at 11-121 folds into the PX domain; that stretch reads REAEPAKEAR…AHFLHFHFYE (111 aa). The tract at residues 120–695 is necessary for homooligomerization and targeting to endosomes; sequence YEINGITAAL…ERLALEWALG (576 aa). The segment at 245–869 is interaction with PAK1; sequence LSVRFSATSM…LVYSDKRMVQ (625 aa). LRR repeat units lie at residues 288–309, 311–332, 333–354, 356–377, 378–399, and 403–424; these read ALTT…VKLI, KIEF…QHLY, NLVH…HTKL, NIKT…HKLY, SLVN…RSIG, and CLEH…RTKV. Residues 463–478 show a composition bias toward basic and acidic residues; it reads KSKLSNPEKKGGEDSR. Disordered regions lie at residues 463-501, 524-547, 554-573, and 628-687; these read KSKL…SASL, SSTD…LESI, SDDL…EHAE, and REEG…EEER. Residues Ser-541, Ser-543, and Ser-546 each carry the phosphoserine modification. Positions 634–695 form a coiled coil; it reads EQGEEEDEEE…ERLALEWALG (62 aa). Acidic residues-rich tracts occupy residues 635–649 and 661–685; these read QGEE…EEDV and DVEE…EAEE. Positions 660–869 are interaction with LIMK; sequence PDVEEEEGGG…LVYSDKRMVQ (210 aa). Positions 709-807 are interaction with ITGA5; it reads KVLWCFLIHV…ANLHEFHADL (99 aa). The tract at residues 1016-1104 is disordered; that stretch reads TPGTGGSPQG…PAPPPAEAPA (89 aa). Ser-1022 is modified (phosphoserine). Positions 1032–1043 are enriched in basic and acidic residues; the sequence is PAERRASNDQRP. Over residues 1063–1078 the composition is skewed to low complexity; sequence PAAASASGPAKTPAPA. Thr-1282 is modified (phosphothreonine). A Phosphoserine modification is found at Ser-1284.

Homooligomer. Interacts with GRB2. Interacts with PIK3R1; probably associates with the PI3-kinase complex. Interacts with IRS4. Found in a complex with ITGA5 and PAK1. Found in a complex with LIMK1 and PAK1. Interacts with ITGA5 (via cytoplasmic domain); this interaction is direct. Interacts with PAK1 (via kinase domain); this interaction is direct and is increased upon activation of PAK1. Interacts with LIMK1 (via PDZ and kinase domain); this interaction is direct. Interacts with LIMK2; this interaction depends on LIMK2 activity. Interacts with RAC1 (activated state). Interacts with STK11; this interaction may increase STK11 activity. In terms of tissue distribution, isoform 1, isoform 3 and isoform 4 are expressed in brain. Isoform 1 is expressed in endocrine tissues.

It is found in the cell membrane. The protein resides in the cytoplasm. Its subcellular location is the early endosome. The protein localises to the recycling endosome. In terms of biological role, acts either as the functional imidazoline-1 receptor (I1R) candidate or as a membrane-associated mediator of the I1R signaling. Binds numerous imidazoline ligands that induces initiation of cell-signaling cascades triggering to cell survival, growth and migration. Its activation by the agonist rilmenidine induces an increase in phosphorylation of mitogen-activated protein kinases MAPK1 and MAPK3 in rostral ventrolateral medulla (RVLM) neurons that exhibited rilmenidine-evoked hypotension. Blocking its activation with efaroxan abolished rilmenidine-induced mitogen-activated protein kinase phosphorylation in RVLM neurons. Acts as a modulator of Rac-regulated signal transduction pathways. Suppresses Rac1-stimulated cell migration by interacting with PAK1 and inhibiting its kinase activity. Also blocks Pak-independent Rac signaling by interacting with RAC1 and inhibiting Rac1-stimulated NF-kB response element and cyclin D1 promoter activation. Also inhibits LIMK1 kinase activity by reducing LIMK1 'Tyr-508' phosphorylation. Inhibits Rac-induced cell migration and invasion in breast and colon epithelial cells. Inhibits lamellipodia formation, when overexpressed. Plays a role in protection against apoptosis. Involved in association with IRS4 in the enhancement of insulin activation of MAPK1 and MAPK3. When overexpressed, induces a redistribution of cell surface ITGA5 integrin to intracellular endosomal structures. The protein is Nischarin (NISCH) of Homo sapiens (Human).